A 397-amino-acid chain; its full sequence is Proteasome-activating nucleotidase (397 aa).

Positions 15–58 (DYVTFLKRRIRQLELQVRTLEADKERLERELSRLRMEMSRLRQP) form a coiled coil. Residues 182 to 187 (GCGKTL) and His321 contribute to the ATP site. Positions 395–397 (MYG) are docks into pockets in the proteasome alpha-ring to cause gate opening.

It belongs to the AAA ATPase family. As to quaternary structure, homohexamer. The hexameric complex has a two-ring architecture resembling a top hat that caps the 20S proteasome core at one or both ends. Upon ATP-binding, the C-terminus of PAN interacts with the alpha-rings of the proteasome core by binding to the intersubunit pockets.

Its subcellular location is the cytoplasm. In terms of biological role, ATPase which is responsible for recognizing, binding, unfolding and translocation of substrate proteins into the archaeal 20S proteasome core particle. Is essential for opening the gate of the 20S proteasome via an interaction with its C-terminus, thereby allowing substrate entry and access to the site of proteolysis. Thus, the C-termini of the proteasomal ATPase function like a 'key in a lock' to induce gate opening and therefore regulate proteolysis. Unfolding activity requires energy from ATP hydrolysis, whereas ATP binding alone promotes ATPase-20S proteasome association which triggers gate opening, and supports translocation of unfolded substrates. This Thermococcus kodakarensis (strain ATCC BAA-918 / JCM 12380 / KOD1) (Pyrococcus kodakaraensis (strain KOD1)) protein is Proteasome-activating nucleotidase.